Reading from the N-terminus, the 250-residue chain is MRTPLVMGNWKLNGTKESVSALIKGIEAAADAAKNVEVAVCPPTIFIEQVANLVANNSIELGAQDVSTNISGAFTGETSPVMVKEFGAKYSLVGHSERRQYHNETDAVVAAKFVAIQANGLVPVLCIGETLEERETDKTFNVVETQLKAVIDVSGIDALENAVIAYEPVWAIGTGKVASSEQAQDVHAHIRTWLAEQSKVVAAKVQILYGGSVKASSAKELFAQPDIDGGLVGGAALLVEEFVGIIEGAK.

Position 9-11 (9-11 (NWK)) interacts with substrate. Residue histidine 95 is the Electrophile of the active site. Glutamate 167 functions as the Proton acceptor in the catalytic mechanism. Residues glycine 173, serine 212, and 233–234 (GG) contribute to the substrate site.

Belongs to the triosephosphate isomerase family. Homodimer.

It is found in the cytoplasm. It catalyses the reaction D-glyceraldehyde 3-phosphate = dihydroxyacetone phosphate. Its pathway is carbohydrate biosynthesis; gluconeogenesis. It functions in the pathway carbohydrate degradation; glycolysis; D-glyceraldehyde 3-phosphate from glycerone phosphate: step 1/1. Its function is as follows. Involved in the gluconeogenesis. Catalyzes stereospecifically the conversion of dihydroxyacetone phosphate (DHAP) to D-glyceraldehyde-3-phosphate (G3P). This is Triosephosphate isomerase from Psychromonas ingrahamii (strain DSM 17664 / CCUG 51855 / 37).